A 1287-amino-acid polypeptide reads, in one-letter code: FYVE zinc finger domain protein UPA1 (1287 aa).

Residues 1–298 (MTIPDPANII…SSTSLSAPAE (298 aa)) form a disordered region. Residues 86–99 (DSSSFGSKPSSSAS) are compositionally biased toward low complexity. The span at 115–136 (WATSSTTSHPSKASQSTLSPNA) shows a compositional bias: polar residues. A PAM2 motif is present at residues 128 to 144 (SQSTLSPNASVFKPSRS). Composition is skewed to basic and acidic residues over residues 177–187 (RPDHAPLDHEQ) and 201–211 (KVEEQRGDHSI). Residues 212–235 (PHQNGLVSAQAQTASDAVSTSKYT) are compositionally biased toward polar residues. A PAM2L 1 motif is present at residues 239-253 (ADQEEDQDDFVYPGA). Polar residues predominate over residues 255-294 (SPSSGQAAVQDEQQAVTDSQTTKSLTKQESDPEASSTSLS). ANK repeat units follow at residues 366–395 (NGLVPLHFAAKDGKTDIVRWLITQAGAIVE), 400–429 (EGETALHKAAMAGKLSVASLLLSHGADANA), 433–463 (DGWTALHNACSRGYLDLVRLLVDRGHAQIDV), and 468–497 (GAWTPLMNAASKGHLPVVRHLTAKYHADPF). Disordered regions lie at residues 582-630 (NGGK…VGLP), 643-697 (RVGP…ASAQ), 934-960 (REAAGLDEDEDEDAADDDDDEFIYPNS), and 977-1005 (TSGTLSRPSLSQRQSSAASMLRNSVAPSE). The span at 674–695 (STPTPESVLQARRGTSSVNGAS) shows a compositional bias: polar residues. Residues 938-955 (GLDEDEDEDAADDDDDEF) are compositionally biased toward acidic residues. Residues 941–960 (EDEDEDAADDDDDEFIYPNS) carry the PAM2L 2 motif. Residues 981 to 995 (LSRPSLSQRQSSAAS) show a composition bias toward low complexity. The segment at 1055-1129 (DEEAKDCIGC…VCNGCHAELQ (75 aa)) adopts an FYVE-type zinc-finger fold. Residues Cys-1061, Cys-1064, Cys-1077, Cys-1080, Cys-1085, Cys-1088, Cys-1121, and Cys-1124 each coordinate Zn(2+). The RING-type; atypical zinc finger occupies 1243–1283 (CSICMEDFVANSTIARLPCLCYFHRGCIDSWFKRGRECPVH).

The protein belongs to the UPA1 PAM2 domain-binding protein family. As to quaternary structure, part of large ribonucleoprotein complexes (mRNPs) containing RNA-binding proteins RRM4 and PAB1, endosome-binding protein UPA1, core scaffold protein UPA2 and associated factor GRP1. Interacts (via PAM2 motif) with PAB1 (via PABC domain). Interacts (via PAM2L motifs) with RRM4.

The protein resides in the cytoplasm. The protein localises to the cytoskeleton. It is found in the endosome. Functionally, FYVE zinc finger domain protein that functions in endosomal targeting and transport of mRNAs, as well as associated ribosomes. The endosomal mRNA transport regulates polarity of the infectious hyphae by transporting a broad spectrum of cargo mRNAs from the nucleus to cell poles. Involved in chitinase CTS1 secretion. Dispensable for general endosomal functions but crucial for endosomal recruitment of RRM4. The protein is FYVE zinc finger domain protein UPA1 of Mycosarcoma maydis (Corn smut fungus).